The chain runs to 341 residues: MDWQRLIVSYLVGFVLLNVLLGLMAYMTWFERRVLARMQHRVGPNRTGPFGLLQPIADGIKLLAKEDIVPANADRLVFLVAPLLSFALAPLGAAVIPFGDTLQLFGIEIPLLVADINVAVLYVLALGSVGVYGIILGGYASGNRYSLLGALRSTAQVISYELVLGLSLVGVFILSGSLSLQDILREQQRMLVLGPLTLPNWYILSQPLAFALFLIAAVAETNRAPFDLPEAETELVAGYFTEYSGFRFSFYFLAEYINMIVVSLLAATLFLGGIDGPFADGVWWLALKALFFLFFYVWLRATLPRFRYDQLMGLAWKVLLPLALLNIGLTGLVRLWGIGAL.

The next 8 membrane-spanning stretches (helical) occupy residues 6 to 26, 76 to 96, 118 to 138, 157 to 177, 198 to 218, 252 to 272, 278 to 298, and 313 to 333; these read LIVS…LMAY, LVFL…AAVI, VAVL…ILGG, VISY…LSGS, LPNW…IAAV, FLAE…LFLG, FADG…FYVW, and GLAW…TGLV.

Belongs to the complex I subunit 1 family. In terms of assembly, NDH-1 is composed of 14 different subunits. Subunits NuoA, H, J, K, L, M, N constitute the membrane sector of the complex.

Its subcellular location is the cell membrane. It catalyses the reaction a quinone + NADH + 5 H(+)(in) = a quinol + NAD(+) + 4 H(+)(out). Its function is as follows. NDH-1 shuttles electrons from NADH, via FMN and iron-sulfur (Fe-S) centers, to quinones in the respiratory chain. The immediate electron acceptor for the enzyme in this species is believed to be ubiquinone. Couples the redox reaction to proton translocation (for every two electrons transferred, four hydrogen ions are translocated across the cytoplasmic membrane), and thus conserves the redox energy in a proton gradient. This subunit may bind ubiquinone. The protein is NADH-quinone oxidoreductase subunit H of Thermomicrobium roseum (strain ATCC 27502 / DSM 5159 / P-2).